The following is a 113-amino-acid chain: Guanylate cyclase activator 2B (113 aa).

The N-terminal stretch at 1–27 (MASRAAAGLLLCGVALVFLVLLQGTQS) is a signal peptide. A propeptide spanning residues 28–97 (VYIQYQGFRV…SIFQALRTIA (70 aa)) is cleaved from the precursor. 3 cysteine pairs are disulfide-bonded: Cys68/Cys81, Cys101/Cys109, and Cys104/Cys112.

The protein belongs to the guanylin family.

The protein resides in the secreted. Functionally, endogenous activator of intestinal guanylate cyclase. It stimulates this enzyme through the same receptor binding region as the heat-stable enterotoxins. May be a potent physiological regulator of intestinal fluid and electrolyte transport. May be an autocrine/paracrine regulator of intestinal salt and water transport. This Sus scrofa (Pig) protein is Guanylate cyclase activator 2B (GUCA2B).